Here is a 100-residue protein sequence, read N- to C-terminus: Integration host factor subunit alpha (100 aa).

Belongs to the bacterial histone-like protein family. Heterodimer of an alpha and a beta chain.

In terms of biological role, this protein is one of the two subunits of integration host factor, a specific DNA-binding protein that functions in genetic recombination as well as in transcriptional and translational control. The protein is Integration host factor subunit alpha of Ruegeria pomeroyi (strain ATCC 700808 / DSM 15171 / DSS-3) (Silicibacter pomeroyi).